The sequence spans 122 residues: MTAASRQEVLGLYRSFFRLARKWQAASGQMEDTIKEKQYILNEARTLFQKNKNLTDPDLIKQCIDECTARIEIGLHYQIPYPRPIHLPPMGLTPRRGRGLQTQEKLRKFSKPLYLKSHDEVS.

This sequence belongs to the complex I LYR family.

May promote cell proliferation and inhibition of apoptosis of preadipocytes. The protein is LYR motif-containing protein 1 (Lyrm1) of Rattus norvegicus (Rat).